The following is a 1305-amino-acid chain: Contactin-associated protein like 5-1 (1305 aa).

Positions 1-24 are cleaved as a signal peptide; the sequence is MDSLQRLNGLLTLVLSALWHLGLT. One can recognise an F5/8 type C domain in the interval 25 to 174; the sequence is ASNYNCDDPL…IGMRVEAYGC (150 aa). Laminin G-like domains lie at 180–360 and 367–544; these read VADF…TFSC and PITF…IDLC. A glycan (N-linked (GlcNAc...) asparagine) is linked at N282. An intrachain disulfide couples C329 to C360. N496 is a glycosylation site (N-linked (GlcNAc...) asparagine). Intrachain disulfides connect C512/C544, C550/C561, and C555/C570. An EGF-like 1 domain is found at 546-583; the sequence is IKDRCLPNYCEHGGHCAQTWTTFYCNCSDTGYTGATCH. N-linked (GlcNAc...) asparagine glycosylation is present at N571. The cysteines at positions 572 and 582 are disulfide-linked. Residues 584 to 790 enclose the Fibrinogen C-terminal domain; sequence DSIYEQSCEV…LRCNGDRHFW (207 aa). N622 is a glycosylation site (N-linked (GlcNAc...) asparagine). Positions 791 to 956 constitute a Laminin G-like 3 domain; sequence NAVSFSTEAS…KLMSGVTPGC (166 aa). 4 disulfides stabilise this stretch: C929/C956, C960/C973, C967/C982, and C984/C994. The EGF-like 2 domain occupies 957–995; sequence PGHCSSYSSNCHNGGKCVEKQSGYSCDCTNSPNEGPFCQ. The Laminin G-like 4 domain maps to 1014–1198; sequence EPYLVIKNTS…VHGTLTESGC (185 aa). An N-linked (GlcNAc...) asparagine glycan is attached at N1057. C1163 and C1198 are disulfide-bonded. A helical membrane pass occupies residues 1238 to 1258; the sequence is VIGGIIAVVTFVTFCVIGIMI.

It belongs to the neurexin family.

Its subcellular location is the membrane. Functionally, may play a role in the correct development and proper functioning of the peripheral and central nervous system and be involved in cell adhesion and intercellular communication. The protein is Contactin-associated protein like 5-1 (Cntnap5a) of Rattus norvegicus (Rat).